We begin with the raw amino-acid sequence, 676 residues long: Basic proline-rich protein (676 aa).

Positions 1–16 (MLPILLSVALLALSSA) are cleaved as a signal peptide. Phosphoserine is present on residues Ser28 and Ser30. Residues 29 to 676 (NSAEKFLRPP…PRPPPGPPPQ (648 aa)) are disordered. 3 stretches are compositionally biased toward pro residues: residues 36-50 (RPPP…PPPE), 71-424 (GPAP…PPAD), and 442-676 (PPPA…PPPQ). The propeptide occupies 409–457 (APPGARPPPPPPPPADEPQQGPAPSGDKPKKKPPPPAGPPPPGPPSPGP).

Acinar cells and secretory granules of the parotid gland.

Its subcellular location is the secreted. In terms of biological role, the parotid hormone stimulates dentinal fluid transport in teeth. The polypeptide is Basic proline-rich protein (Sus scrofa (Pig)).